A 199-amino-acid chain; its full sequence is Mediator of RNA polymerase II transcription subunit 29 (199 aa).

Residues 1-17 (MAAPQPQAAAVSSASGV) show a composition bias toward low complexity. Residues 1–47 (MAAPQPQAAAVSSASGVSGPGSAGGPGPQQQPQPTQLVGSAQSGLLQ) form a disordered region. Residue alanine 2 is modified to N-acetylalanine. Residues 18 to 27 (SGPGSAGGPG) show a composition bias toward gly residues. A compositionally biased stretch (low complexity) spans 28–47 (PQQQPQPTQLVGSAQSGLLQ).

It belongs to the Mediator complex subunit 29 family. In terms of assembly, component of the Mediator complex, which is composed of MED1, MED4, MED6, MED7, MED8, MED9, MED10, MED11, MED12, MED13, MED13L, MED14, MED15, MED16, MED17, MED18, MED19, MED20, MED21, MED22, MED23, MED24, MED25, MED26, MED27, MED29, MED30, MED31, CCNC, CDK8 and CDC2L6/CDK11. The MED12, MED13, CCNC and CDK8 subunits form a distinct module termed the CDK8 module. Mediator containing the CDK8 module is less active than Mediator lacking this module in supporting transcriptional activation. Individual preparations of the Mediator complex lacking one or more distinct subunits have been variously termed ARC, CRSP, DRIP, PC2, SMCC and TRAP. Associates with the MED18/MED20 heteromer.

The protein localises to the nucleus. Functionally, component of the Mediator complex, a coactivator involved in the regulated transcription of nearly all RNA polymerase II-dependent genes. Mediator functions as a bridge to convey information from gene-specific regulatory proteins to the basal RNA polymerase II transcription machinery. Mediator is recruited to promoters by direct interactions with regulatory proteins and serves as a scaffold for the assembly of a functional preinitiation complex with RNA polymerase II and the general transcription factors. The protein is Mediator of RNA polymerase II transcription subunit 29 (Med29) of Mus musculus (Mouse).